Here is a 246-residue protein sequence, read N- to C-terminus: Flagellar brake protein YcgR (246 aa).

Positions 122–234 (QRREFFRIQT…PMETIIQRYV (113 aa)) constitute a PilZ domain.

It belongs to the YcgR family. As to quaternary structure, monomer. Interacts with the flagellar basal bodies.

It localises to the bacterial flagellum basal body. Functionally, acts as a flagellar brake, regulating swimming and swarming in a bis-(3'-5') cyclic diguanylic acid (c-di-GMP)-dependent manner. Binds 1 c-di-GMP dimer per subunit. Increasing levels of c-di-GMP lead to decreased motility. This chain is Flagellar brake protein YcgR, found in Chromobacterium violaceum (strain ATCC 12472 / DSM 30191 / JCM 1249 / CCUG 213 / NBRC 12614 / NCIMB 9131 / NCTC 9757 / MK).